The following is a 236-amino-acid chain: Purine nucleoside phosphorylase DeoD-type 1 (236 aa).

A purine D-ribonucleoside is bound at residue His5. Residues Gly21, Arg25, Arg44, and 88–91 each bind phosphate; that span reads RVGS. A purine D-ribonucleoside-binding positions include 180–182 and 204–205; these read EME and TD. Catalysis depends on Asp205, which acts as the Proton donor.

It belongs to the PNP/UDP phosphorylase family. Homohexamer; trimer of homodimers.

It catalyses the reaction a purine D-ribonucleoside + phosphate = a purine nucleobase + alpha-D-ribose 1-phosphate. The catalysed reaction is a purine 2'-deoxy-D-ribonucleoside + phosphate = a purine nucleobase + 2-deoxy-alpha-D-ribose 1-phosphate. Its function is as follows. Catalyzes the reversible phosphorolytic breakdown of the N-glycosidic bond in the beta-(deoxy)ribonucleoside molecules, with the formation of the corresponding free purine bases and pentose-1-phosphate. The sequence is that of Purine nucleoside phosphorylase DeoD-type 1 from Shewanella oneidensis (strain ATCC 700550 / JCM 31522 / CIP 106686 / LMG 19005 / NCIMB 14063 / MR-1).